A 263-amino-acid chain; its full sequence is Probable methylthioribulose-1-phosphate dehydratase (263 aa).

Residue cysteine 102 coordinates substrate. Zn(2+)-binding residues include histidine 120 and histidine 122. Residue glutamate 144 is the Proton donor/acceptor of the active site. Histidine 200 is a binding site for Zn(2+).

Belongs to the aldolase class II family. MtnB subfamily. Requires Zn(2+) as cofactor.

It is found in the cytoplasm. It carries out the reaction 5-(methylsulfanyl)-D-ribulose 1-phosphate = 5-methylsulfanyl-2,3-dioxopentyl phosphate + H2O. The protein operates within amino-acid biosynthesis; L-methionine biosynthesis via salvage pathway; L-methionine from S-methyl-5-thio-alpha-D-ribose 1-phosphate: step 2/6. In terms of biological role, catalyzes the dehydration of methylthioribulose-1-phosphate (MTRu-1-P) into 2,3-diketo-5-methylthiopentyl-1-phosphate (DK-MTP-1-P). This Caenorhabditis elegans protein is Probable methylthioribulose-1-phosphate dehydratase.